The primary structure comprises 599 residues: Kelch repeat and BTB domain-containing protein 8 (599 aa).

A disordered region spans residues 1–25 (MAASADLSKSSPTPNGIPSSDTAND). Over residues 7–25 (LSKSSPTPNGIPSSDTAND) the composition is skewed to polar residues. The BTB domain occupies 49 to 117 (TDIVVEVDHG…AYTSRVILTE (69 aa)). Positions 152 to 254 (SIGVFIFADH…MEDTFIEKIP (103 aa)) constitute a BACK domain. 5 Kelch repeats span residues 334 to 388 (DIYI…YCCG), 389 to 439 (KMYA…EHKE), 441 to 479 (IYVLQGEFFLFYEPQKDYWGFLTPMTVPRIQGLAAVYKD), 481 to 530 (IYYI…LFQN), and 540 to 586 (QVTV…FECA).

It belongs to the KBTBD8 family. As to quaternary structure, component of the BCR(KBTBD8) E3 ubiquitin ligase complex, at least composed of CUL3, KBTBD8 and RBX1.

It is found in the cytoplasm. The protein localises to the cytoskeleton. Its subcellular location is the spindle. The protein resides in the golgi apparatus. Functionally, substrate-specific adapter of a BCR (BTB-CUL3-RBX1) E3 ubiquitin ligase complex that acts as a regulator of neural crest specification. The BCR(KBTBD8) complex acts by mediating monoubiquitination of NOLC1 and TCOF1: monoubiquitination promotes the formation of a NOLC1-TCOF1 complex that acts as a platform to connect RNA polymerase I with enzymes responsible for ribosomal processing and modification, leading to remodel the translational program of differentiating cells in favor of neural crest specification. The sequence is that of Kelch repeat and BTB domain-containing protein 8 (Kbtbd8) from Mus musculus (Mouse).